Here is an 82-residue protein sequence, read N- to C-terminus: RNA-binding protein Hfq (82 aa).

One can recognise a Sm domain in the interval 11–71 (DTFLNHVRKT…ISTIMPGAPI (61 aa)).

Belongs to the Hfq family. Homohexamer.

Functionally, RNA chaperone that binds small regulatory RNA (sRNAs) and mRNAs to facilitate mRNA translational regulation in response to envelope stress, environmental stress and changes in metabolite concentrations. Also binds with high specificity to tRNAs. In Nitrobacter winogradskyi (strain ATCC 25391 / DSM 10237 / CIP 104748 / NCIMB 11846 / Nb-255), this protein is RNA-binding protein Hfq.